The primary structure comprises 137 residues: uncharacterized protein (137 aa).

3 consecutive transmembrane segments (helical) span residues 5 to 25 (ELLW…VLVI), 79 to 99 (IAAI…WGYY), and 109 to 129 (FALG…SILW).

The protein belongs to the MAPEG family.

It is found in the cell membrane. This is an uncharacterized protein from Synechocystis sp. (strain ATCC 27184 / PCC 6803 / Kazusa).